Consider the following 460-residue polypeptide: Phosphoglucomutase (460 aa).

Catalysis depends on S103, which acts as the Phosphoserine intermediate. A Mg(2+)-binding site is contributed by S103. Substrate contacts are provided by residues 103–104 and K113; that span reads SH. The Mg(2+) site is built by D239, D241, and D243. Substrate-binding positions include 243–244, T303, and 322–324; these read DR and EMS.

Belongs to the phosphohexose mutase family. Mg(2+) is required as a cofactor.

It localises to the cytoplasm. It catalyses the reaction alpha-D-glucose 1-phosphate = alpha-D-glucose 6-phosphate. This enzyme participates in both the breakdown and synthesis of glucose. In Neisseria meningitidis serogroup B (strain ATCC BAA-335 / MC58), this protein is Phosphoglucomutase (pgm).